The chain runs to 214 residues: Guanylate kinase (214 aa).

A Guanylate kinase-like domain is found at 12 to 191 (GLMLVMSSPS…SIAAVQAILA (180 aa)). 19-26 (SPSGAGKT) serves as a coordination point for ATP.

This sequence belongs to the guanylate kinase family.

Its subcellular location is the cytoplasm. It catalyses the reaction GMP + ATP = GDP + ADP. Essential for recycling GMP and indirectly, cGMP. This is Guanylate kinase from Paramagnetospirillum magneticum (strain ATCC 700264 / AMB-1) (Magnetospirillum magneticum).